Here is a 94-residue protein sequence, read N- to C-terminus: MRKYETVFILNPALDEEGYKANVEKFKSVIENAGGTVDNVDLWGKRKLAYEVKKVSEGYYTLMNFTADTELPKELDRVFRITDTVIRHMIITQE.

The protein belongs to the bacterial ribosomal protein bS6 family.

Its function is as follows. Binds together with bS18 to 16S ribosomal RNA. The protein is Small ribosomal subunit protein bS6 of Clostridium botulinum (strain 657 / Type Ba4).